Here is a 254-residue protein sequence, read N- to C-terminus: MKIGVYGASGRIGKLLLEELKGGYKGLELSSVFVRQKCETDFSSFSHAPLVTNDLKAFVRACECVIDFSLPKGVDHLLEALLECPKILVSGTTGLEKETLEKMQKLALKAPLLHAHNMSIGIMMLNQLAFLASLKLKDADIEIIETHHNLKKDAPSGTALSLYETCAKARGYDEKNALTTHREGLRSKESIGIAALRGGDVAGKHTIGFYLEGEYIELSHTATNRSIFAKGALEVALWLKDKAAKKYEINEMFG.

Residue 7–12 participates in NAD(+) binding; the sequence is GASGRI. An NADP(+)-binding site is contributed by R35. NAD(+) is bound by residues 91–93 and 115–118; these read GTT and AHNM. H147 acts as the Proton donor/acceptor in catalysis. H148 serves as a coordination point for (S)-2,3,4,5-tetrahydrodipicolinate. Residue K151 is the Proton donor of the active site. A (S)-2,3,4,5-tetrahydrodipicolinate-binding site is contributed by 157–158; sequence GT.

This sequence belongs to the DapB family.

The protein localises to the cytoplasm. The catalysed reaction is (S)-2,3,4,5-tetrahydrodipicolinate + NAD(+) + H2O = (2S,4S)-4-hydroxy-2,3,4,5-tetrahydrodipicolinate + NADH + H(+). The enzyme catalyses (S)-2,3,4,5-tetrahydrodipicolinate + NADP(+) + H2O = (2S,4S)-4-hydroxy-2,3,4,5-tetrahydrodipicolinate + NADPH + H(+). It functions in the pathway amino-acid biosynthesis; L-lysine biosynthesis via DAP pathway; (S)-tetrahydrodipicolinate from L-aspartate: step 4/4. Catalyzes the conversion of 4-hydroxy-tetrahydrodipicolinate (HTPA) to tetrahydrodipicolinate. The chain is 4-hydroxy-tetrahydrodipicolinate reductase from Helicobacter pylori (strain G27).